Consider the following 1144-residue polypeptide: Guanine nucleotide-binding protein G(s) subunit alpha isoforms XLas (1144 aa).

Disordered stretches follow at residues 1–186 (MGML…LAPG), 316–558 (DDDT…PAAG), 622–657 (SASA…SAWP), and 735–772 (RSRS…DKKR). The segment covering 31 to 46 (LEAQGAAAPGAGVGPA) has biased composition (low complexity). Residues 343–356 (KSEHAKRPPLERQA) show a composition bias toward basic and acidic residues. Over residues 358 to 369 (ETGNSPISSTTA) the composition is skewed to polar residues. The segment covering 370–381 (EEAKVPSLERGE) has biased composition (basic and acidic residues). Composition is skewed to low complexity over residues 467 to 499 (PAAA…AAEA) and 518 to 558 (EPAA…PAAG). Over residues 644-654 (PPTPRPAPRPS) the composition is skewed to pro residues. Over residues 743–767 (KAKDPMEERRKQMRKEAMEMREQKR) the composition is skewed to basic and acidic residues. The stretch at 745 to 772 (KDPMEERRKQMRKEAMEMREQKRADKKR) forms a coiled coil. The region spanning 789 to 1144 (CTHRLLLLGA…RMHLRQYELL (356 aa)) is the G-alpha domain. Residues 792-805 (RLLLLGAGESGKST) are G1 motif. Position 797 to 805 (797 to 805 (GAGESGKST)) interacts with GTP. Ser-804 provides a ligand contact to Mg(2+). Positions 818-840 (FNGEGGEEDPQAARSNSDGEKAT) are disordered. Residues 837–863 (EKATKVQDIKNNLKEAIETIVAAMSNL) adopt a coiled-coil conformation. Positions 946–954 (DLPRCRVLT) are G2 motif. GTP is bound by residues 947–954 (LPRCRVLT), 973–977 (DVGGQ), and 1042–1045 (NKQD). Arg-951 is subject to ADP-ribosylarginine; by cholera toxin. A Mg(2+)-binding site is contributed by Thr-954. The G3 motif stretch occupies residues 969 to 978 (FHMFDVGGQR). Residues 1038-1045 (ILFLNKQD) form a G4 motif region. Position 1102 is a phosphoserine (Ser-1102). The interval 1114–1119 (TCAVDT) is G5 motif. Residue Ala-1116 coordinates GTP.

The protein belongs to the G-alpha family. G(s) subfamily. As to quaternary structure, g proteins are composed of 3 units; alpha, beta and gamma. The alpha chain contains the guanine nucleotide binding site. Interacts through its N-terminal region with ALEX which is produced from the same locus in a different open reading frame. This interaction may inhibit its adenylyl cyclase-stimulating activity. Interacts with MAGED2. As to expression, enriched in neuroendocrine tissues with a particularly high level of expression in pituitary where it is abundant in intermediate and anterior lobes. In adrenal gland, found in central region containing medullary chromaffin cells but not in cortex. In cerebellum, strongly expressed in perikarya of Purkinje cells. Not detected in liver, kidney or neurohypophysis.

Its subcellular location is the cell membrane. It localises to the apical cell membrane. Guanine nucleotide-binding proteins (G proteins) function as transducers in numerous signaling pathways controlled by G protein-coupled receptors (GPCRs). Signaling involves the activation of adenylyl cyclases, resulting in increased levels of the signaling molecule cAMP. GNAS functions downstream of several GPCRs, including beta-adrenergic receptors. XLas isoforms interact with the same set of receptors as Gnas isoforms. This chain is Guanine nucleotide-binding protein G(s) subunit alpha isoforms XLas, found in Rattus norvegicus (Rat).